Consider the following 2622-residue polypeptide: Ankyrin-3 (2622 aa).

Residues 1–44 (MAHAASQLKKNRDLEINAEEETEKKKKHRKRSRDRKKKSDANAS) form a disordered region. A compositionally biased stretch (basic residues) spans 25 to 38 (KKKHRKRSRDRKKK). Serine 39 carries the phosphoserine modification. ANK repeat units lie at residues 73–102 (NGLNALHLASKEGHVEVVSELLQREANVDA), 106–135 (KGNTALHIASLAGQAEVVKVLVTNGANVNA), 139–168 (NGFTPLYMAAQENHLEVVRFLLDNGASQSL), 172–201 (DGFTPLAVALQQGHDQVVSLLLENDTKGKV), 203–230 (LPALHIAARKDDTKAAALLLQNDTNADI), 242–271 (SGFTPLHIAAHYGNINVATLLLNRAAAVDF), 275–304 (NDITPLHVASKRGNANMVKLLLDRGAKIDA), 308–337 (DGLTPLHCGARSGHEQVVEMLLDRAAPILS), 341–370 (NGLSPLHMATQGDHLNCVQLLLQHNVPVDD), 374–403 (DYLTALHVAAHCGHYKVAKVLLDKKANPNA), 407–436 (NGFTPLHIACKKNRIRVMELLLKHGASIQA), 440–469 (SGLTPIHVAAFMGHVNIVSQLMHHGASPNT), 473–502 (RGETALHMAARSGQAEVVRYLVQDGAQVEA), 506–535 (DDQTPLHISARLGKADIVQQLLQQGASPNA), 539–568 (SGYTPLHLSAREGHEDVAAFLLDHGASLSI), 572–601 (KGFTPLHVAAKYGKLEVASLLLQKSASPDA), 605–634 (SGLTPLHVAAHYDNQKVALLLLDQGASPHA), 638–667 (NGYTPLHIAAKKNQMDIATSLLEYGADANA), 671–700 (QGIASVHLAAQEGHVDMVSLLLSRNANVNL), 704–733 (SGLTPLHLAAQEDRVNVAEVLVNQGAHVDA), 737–766 (MGYTPLHVGCHYGNIKIVNFLLQHSAKVNA), 770–799 (NGYTPLHQAAQQGHTHIINVLLQNNASPNE), and 803–832 (NGNTALAIARRLGYISVVDTLKVVTEEIMT). Serine 631 carries the phosphoserine modification. Valine 851, serine 855, serine 869, serine 875, serine 921, serine 924, serine 930, serine 965, serine 967, and serine 1121 each carry phosphoserine. The tract at residues 868–889 (LSDGEYISDGEEGEDAITGDTD) is disordered. Residues 873–884 (YISDGEEGEDAI) show a composition bias toward acidic residues. ZU5 domains lie at 992–1147 (FLVS…VVSR) and 1149–1296 (KQES…LADC). A phosphoserine mark is found at serine 1458 and serine 1469. The segment at 1510-1539 (TPITVPGPAKSGSLSSSPSNTPSASPLKSI) is disordered. Low complexity predominate over residues 1515 to 1536 (PGPAKSGSLSSSPSNTPSASPL). Serine 1621, serine 1624, serine 1679, serine 1984, serine 2102, serine 2114, and serine 2117 each carry phosphoserine. Disordered stretches follow at residues 1968–1992 (VESKGPPKSPKSDKGHSPEDDWTEF), 2099–2147 (ILES…FHEV), and 2292–2312 (SPDVAKSAAETSAQHAEKDNQ). The segment covering 1977 to 1986 (PKSDKGHSPE) has biased composition (basic and acidic residues). Positions 2106-2127 (FSQHDQDKSPLSDSGFETRSEK) are enriched in basic and acidic residues. The span at 2128 to 2137 (TPSAPQSAES) shows a compositional bias: polar residues. The Death domain maps to 2336–2420 (TDIRMAIVAD…DIVTLLEGPI (85 aa)). Phosphoserine is present on residues serine 2457, serine 2475, and serine 2544. Residues 2568–2622 (CVPVGMKKMTRTPADGKARLNLQEEEGSARSEPKQGEGYKVKTKKEIRNVEKKAH) form a disordered region. Basic and acidic residues predominate over residues 2594 to 2622 (GSARSEPKQGEGYKVKTKKEIRNVEKKAH).

May be a constituent of a NFASC/NRCAM/ankyrin G complex. Interacts with RHBG. Directly interacts with DMD and betaDAG1; this interaction does not interfere with DMD-binding and is required for DMD and betaDAG1 retention at costameres. Interacts (via N-terminal ANK repeats) with SCHIP1 isoform 7 (via C-terminus); this interaction is required for the localization at axon initial segments (AISs) and nodes of Ranvier (NRs). Interacts with PLEC and FLNC. Interacts (via ANK repeats) with IQCJ-SCHIP1; required for IQCJ-SCHIP1 localization at axon initial segments (AIS) and nodes of Ranvier. Interacts with SCHIP1. Interacts with KCNA1; this inhibits channel activity. Interacts with SCN5A. Interacts with PKP2 and GJA1/CX43. In terms of assembly, interacts (via its C-terminal muscle-specific Obscurin/Titin-Binding-related domain sequence) with PLEC and FLNC. In terms of tissue distribution, expressed in the heart (at protein level). Expressed in skeletal muscle (at protein level). Expressed at highest levels in brain and testis, followed by skin, kidney, liver and spleen. As to expression, may be specifically expressed in muscle tissues, including heart and skeletal muscle (extensor digitorum longus) (at protein level). Expressed in skeletal muscle, brain, lung, heart, testes and kidney.

The protein resides in the cytoplasm. The protein localises to the cytoskeleton. Its subcellular location is the cell projection. It is found in the axon. It localises to the cell membrane. The protein resides in the sarcolemma. The protein localises to the postsynaptic cell membrane. Its subcellular location is the lysosome. It is found in the T-tubule. Membrane-cytoskeleton linker. May participate in the maintenance/targeting of ion channels and cell adhesion molecules at the nodes of Ranvier and axonal initial segments. In skeletal muscle, required for costamere localization of DMD and betaDAG1. Regulates KCNA1 channel activity in function of dietary Mg(2+) levels, and thereby contributes to the regulation of renal Mg(2+) reabsorption. Required for intracellular adhesion and junctional conductance in myocytes, potentially via stabilization of GJA1/CX43 protein abundance and promotion of PKP2, GJA1/CX43, and SCN5A/Nav1.5 localization to cell-cell junctions. The polypeptide is Ankyrin-3 (Ank3) (Rattus norvegicus (Rat)).